Consider the following 151-residue polypeptide: Macrodomain Ter protein (151 aa).

The protein belongs to the MatP family. Homodimer.

The protein resides in the cytoplasm. Functionally, required for spatial organization of the terminus region of the chromosome (Ter macrodomain) during the cell cycle. Prevents early segregation of duplicated Ter macrodomains during cell division. Binds specifically to matS, which is a 13 bp signature motif repeated within the Ter macrodomain. This Vibrio atlanticus (strain LGP32) (Vibrio splendidus (strain Mel32)) protein is Macrodomain Ter protein.